The primary structure comprises 310 residues: Olfactory receptor 8I2 (310 aa).

Residues 1-25 are Extracellular-facing; sequence MAGNNFTEVTVFILSGFANHPELQV. The N-linked (GlcNAc...) asparagine glycan is linked to N5. The chain crosses the membrane as a helical span at residues 26–46; that stretch reads SLFLMFLFIYLFTVLGNLGLI. At 47-54 the chain is on the cytoplasmic side; that stretch reads TLIRMDSQ. A helical membrane pass occupies residues 55–75; that stretch reads LHTPMYFFLSNLAFIDIFYSS. Over 76-99 the chain is Extracellular; sequence TVTPKALVNFQSNRRSISFVGCFV. Cysteines 97 and 188 form a disulfide. A helical membrane pass occupies residues 100-120; the sequence is QMYFFVGLVCCECFLLGSMAY. Topologically, residues 121 to 139 are cytoplasmic; the sequence is NRYIAICNPLLYSVVMSQK. Residues 140–160 form a helical membrane-spanning segment; it reads VSNWLGVMPYVIGFTSSLISV. At 161–196 the chain is on the extracellular side; that stretch reads WVISSLAFCDSSINHFFCDTTALLALSCVDTFGTEM. The helical transmembrane segment at 197 to 216 threads the bilayer; sequence VSFVLAGFTLLSSLLIITVT. Residues 217-236 lie on the Cytoplasmic side of the membrane; that stretch reads YIIIISAILRIQSAAGRQKA. The chain crosses the membrane as a helical span at residues 237–257; that stretch reads FSTCASHLMAVTIFYGSLIFT. At 258–270 the chain is on the extracellular side; the sequence is YLQPDNTSSLTQA. A helical membrane pass occupies residues 271–291; sequence QVASVFYTIVIPMLNPLIYSL. Residues 292-310 lie on the Cytoplasmic side of the membrane; it reads RNKDVKNALLRVIHRKLFP.

Belongs to the G-protein coupled receptor 1 family.

Its subcellular location is the cell membrane. Functionally, odorant receptor. In Homo sapiens (Human), this protein is Olfactory receptor 8I2 (OR8I2).